A 601-amino-acid polypeptide reads, in one-letter code: Elongation factor 4 (601 aa).

The tr-type G domain maps to 5 to 187 (SNIRNFSIIA…AIVERLPAPE (183 aa)). Residues 17 to 22 (DHGKST) and 134 to 137 (NKID) each bind GTP.

Belongs to the TRAFAC class translation factor GTPase superfamily. Classic translation factor GTPase family. LepA subfamily.

It localises to the cell inner membrane. It carries out the reaction GTP + H2O = GDP + phosphate + H(+). In terms of biological role, required for accurate and efficient protein synthesis under certain stress conditions. May act as a fidelity factor of the translation reaction, by catalyzing a one-codon backward translocation of tRNAs on improperly translocated ribosomes. Back-translocation proceeds from a post-translocation (POST) complex to a pre-translocation (PRE) complex, thus giving elongation factor G a second chance to translocate the tRNAs correctly. Binds to ribosomes in a GTP-dependent manner. The protein is Elongation factor 4 of Oleidesulfovibrio alaskensis (strain ATCC BAA-1058 / DSM 17464 / G20) (Desulfovibrio alaskensis).